The sequence spans 521 residues: Probable protein kinase UbiB (521 aa).

The Protein kinase domain maps to Ser-119–Ser-497. ATP-binding positions include Val-125–Val-133 and Lys-151. The Proton acceptor role is filled by Asp-286. A helical transmembrane segment spans residues Gln-496–Val-516.

It belongs to the ABC1 family. UbiB subfamily.

Its subcellular location is the cell inner membrane. The protein operates within cofactor biosynthesis; ubiquinone biosynthesis [regulation]. Its function is as follows. Is probably a protein kinase regulator of UbiI activity which is involved in aerobic coenzyme Q (ubiquinone) biosynthesis. This Acidovorax sp. (strain JS42) protein is Probable protein kinase UbiB.